A 112-amino-acid chain; its full sequence is Cryptic phage CTXphi transcriptional repressor RstR (112 aa).

An HTH cro/C1-type domain is found at 7–61 (LANQRKAINKTQAQMADEIGISLTSYKKYESGEGLPTMENLVKIADALEISIDEL). The segment at residues 18–37 (QAQMADEIGISLTSYKKYES) is a DNA-binding region (H-T-H motif).

Its function is as follows. Transcriptional repressor of the integrated CTXPhi phage gene rstA2. The chain is Cryptic phage CTXphi transcriptional repressor RstR (rstR1) from Vibrio cholerae serotype O1 (strain ATCC 39315 / El Tor Inaba N16961).